Reading from the N-terminus, the 535-residue chain is MTDQTTRLPIRRALISVSDKTGVVDFARELVALGVEILSTGGTYKLLRDNGIAAVEVADYTGFPEMMDGRVKTLHPKVHGGILGRRDLDGAVMEQHGIKPIDLVAVNLYPFEATVARPDCDLPSAIENIDIGGPTMVRSAAKNHKDVAIVVNAGDYAAVVEALKAGGLTYAQRFDLALKAFEHTSAYDGMIANYLGTIDQTRDTLGTADRGAFPRTFNSQFVKAQEMRYGENPHQSAAFYVEAKKGEASVSTAIQLQGKELSFNNVADTDAALECVKSFLKPACVIVKHANPCGVAVVPEDEGGIRKAYDLAYATDSESAFGGIIAFNRELDGETARAIVERQFVEVIIAPKISAAAREVVAAKANVRLLECGEWPAERAPGWDFKRVNGGLLVQSRDIGMIKAEDLKIVTRRAPTEQEIHDLIFAWKVAKFVKSNAIVYARNRQTVGVGAGQMSRVNSARIAAIKAEHAGLEVKGAVMASDAFFPFRDGIDNAAKAGITAVIQPGGSMRDNEVIAAADEADIAMVFTGMRHFRH.

An MGS-like domain is found at 6–151 (TRLPIRRALI…KNHKDVAIVV (146 aa)).

It belongs to the PurH family.

It catalyses the reaction (6R)-10-formyltetrahydrofolate + 5-amino-1-(5-phospho-beta-D-ribosyl)imidazole-4-carboxamide = 5-formamido-1-(5-phospho-D-ribosyl)imidazole-4-carboxamide + (6S)-5,6,7,8-tetrahydrofolate. The catalysed reaction is IMP + H2O = 5-formamido-1-(5-phospho-D-ribosyl)imidazole-4-carboxamide. The protein operates within purine metabolism; IMP biosynthesis via de novo pathway; 5-formamido-1-(5-phospho-D-ribosyl)imidazole-4-carboxamide from 5-amino-1-(5-phospho-D-ribosyl)imidazole-4-carboxamide (10-formyl THF route): step 1/1. It participates in purine metabolism; IMP biosynthesis via de novo pathway; IMP from 5-formamido-1-(5-phospho-D-ribosyl)imidazole-4-carboxamide: step 1/1. This chain is Bifunctional purine biosynthesis protein PurH, found in Pseudomonas paraeruginosa (strain DSM 24068 / PA7) (Pseudomonas aeruginosa (strain PA7)).